The sequence spans 124 residues: Large ribosomal subunit protein bL12c (124 aa).

The protein belongs to the bacterial ribosomal protein bL12 family. Homodimer. Part of the ribosomal stalk of the 50S ribosomal subunit. Forms a multimeric L10(L12)X complex, where L10 forms an elongated spine to which 2 to 4 L12 dimers bind in a sequential fashion. Binds GTP-bound translation factors.

The protein localises to the plastid. It localises to the chloroplast. Functionally, forms part of the ribosomal stalk which helps the ribosome interact with GTP-bound translation factors. Is thus essential for accurate translation. The polypeptide is Large ribosomal subunit protein bL12c (Cyanidioschyzon merolae (strain NIES-3377 / 10D) (Unicellular red alga)).